The sequence spans 289 residues: MAWRNRRGALRAILSGSACVRPASVYDAISIRIADDLGFPLGMFGGSVASLAILGDPDIALITLTELAEQMRRMARAAALPVLVDADHGYGNALNVRRTVQELEAAGAAGLTIEDTLLPQAYGEASPQLISREEGLGKIKAALDARLDPSLVIVGRTGACAITSLDDAIDRAVAYQAAGVDALFFTGVKTRPQLDAIAAATTLPIVLGSPPAELTDWDYLAAQRVRIAVQGHAPIAAATEAVSKALSALRDGAAPKQLTGLASAELIDRVTRASLVEERGAQFLGLKRE.

Serine 47 provides a ligand contact to substrate. Aspartate 85 provides a ligand contact to Mg(2+). Positions 156 and 232 each coordinate substrate.

The protein belongs to the isocitrate lyase/PEP mutase superfamily. Oxaloacetate decarboxylase family. As to quaternary structure, homotetramer; dimer of dimers. Requires Mg(2+) as cofactor.

It carries out the reaction oxaloacetate + H(+) = pyruvate + CO2. Catalyzes the decarboxylation of oxaloacetate into pyruvate. Seems to play a role in maintaining cellular concentrations of bicarbonate and pyruvate. This Rhodopseudomonas palustris (strain BisB5) protein is Oxaloacetate decarboxylase.